The chain runs to 457 residues: MADS-box transcription factor 1 (457 aa).

One can recognise an MADS-box domain in the interval 11-71; sequence PSSPRRSIQR…NACHVYSSEE (61 aa). Disordered regions lie at residues 195-278 and 295-328; these read SGDY…SRLH and SSGY…LGQE. Residues 199 to 216 are compositionally biased toward low complexity; the sequence is SDSPLEPSSSSSFSVPPE. Over residues 218 to 234 the composition is skewed to polar residues; that stretch reads LNPTLSFQHNDVPQTDN. Over residues 265-278 the composition is skewed to basic residues; that stretch reads KNRRNGKPRISRLH. Over residues 295–317 the composition is skewed to polar residues; it reads SSGYLDPSSTPITPLDSAINQIT. Ser372 bears the Phosphoserine mark.

Post-translationally, phosphorylated. Occurs periodically during mitosis.

It localises to the nucleus. In terms of biological role, acts as a transcriptional activator with a role in the regulation of mitosis. Regulates septation and the periodic transcription of cdc15. This is MADS-box transcription factor 1 (mbx1) from Schizosaccharomyces pombe (strain 972 / ATCC 24843) (Fission yeast).